The primary structure comprises 228 residues: Octanoyltransferase (228 aa).

In terms of domain architecture, BPL/LPL catalytic spans 32–214; it reads DVVPDTVLLV…HLRRLFERDW (183 aa). Residues 77–84, 144–146, and 157–159 contribute to the substrate site; these read RGGDVTYH, SVG, and GIA. Residue cysteine 175 is the Acyl-thioester intermediate of the active site.

The protein belongs to the LipB family.

The protein localises to the cytoplasm. The catalysed reaction is octanoyl-[ACP] + L-lysyl-[protein] = N(6)-octanoyl-L-lysyl-[protein] + holo-[ACP] + H(+). Its pathway is protein modification; protein lipoylation via endogenous pathway; protein N(6)-(lipoyl)lysine from octanoyl-[acyl-carrier-protein]: step 1/2. Its function is as follows. Catalyzes the transfer of endogenously produced octanoic acid from octanoyl-acyl-carrier-protein onto the lipoyl domains of lipoate-dependent enzymes. Lipoyl-ACP can also act as a substrate although octanoyl-ACP is likely to be the physiological substrate. The sequence is that of Octanoyltransferase from Syntrophobacter fumaroxidans (strain DSM 10017 / MPOB).